The chain runs to 175 residues: Adenine phosphoribosyltransferase (175 aa).

Belongs to the purine/pyrimidine phosphoribosyltransferase family. Homodimer.

It is found in the cytoplasm. The catalysed reaction is AMP + diphosphate = 5-phospho-alpha-D-ribose 1-diphosphate + adenine. The protein operates within purine metabolism; AMP biosynthesis via salvage pathway; AMP from adenine: step 1/1. Its function is as follows. Catalyzes a salvage reaction resulting in the formation of AMP, that is energically less costly than de novo synthesis. The protein is Adenine phosphoribosyltransferase of Francisella philomiragia subsp. philomiragia (strain ATCC 25017 / CCUG 19701 / FSC 153 / O#319-036).